Consider the following 193-residue polypeptide: Bcl-2-binding component 3, isoforms 1/2 (193 aa).

Disordered regions lie at residues 1-28 (MARA…FPLG) and 71-138 (ALGG…REIG). Position 10 is a phosphoserine (S10). Residues 71-82 (ALGGSRWPGGPR) are compositionally biased toward low complexity. The BH3 signature appears at 137–151 (IGAQLRRMADDLNAQ).

The protein belongs to the Bcl-2 family. In terms of assembly, interacts with MCL1 and BCL2A1. Interacts (via BH3 domain) with BCL2. Interacts with BCL2L1/BCL-XL. Interacts (via BH3 domain) with NOL3/ARC (via CARD domain); this interaction prevents BBC3 association with BCL2 and results in CASP8 activation. In terms of tissue distribution, ubiquitously expressed.

The protein localises to the mitochondrion. Its function is as follows. Essential mediator of p53/TP53-dependent and p53/TP53-independent apoptosis. Promotes partial unfolding of BCL2L1 and dissociation of BCL2L1 from p53/TP53, releasing the bound p53/TP53 to induce apoptosis. Regulates ER stress-induced neuronal apoptosis. This chain is Bcl-2-binding component 3, isoforms 1/2 (BBC3), found in Homo sapiens (Human).